A 526-amino-acid chain; its full sequence is Peptide chain release factor 3 (526 aa).

Residues 9–277 form the tr-type G domain; the sequence is DKRRTFAIIS…GIVEWAPKPL (269 aa). GTP-binding positions include 18 to 25, 86 to 90, and 140 to 143; these read SHPDAGKT, DTPGH, and NKLD.

This sequence belongs to the TRAFAC class translation factor GTPase superfamily. Classic translation factor GTPase family. PrfC subfamily.

Its subcellular location is the cytoplasm. In terms of biological role, increases the formation of ribosomal termination complexes and stimulates activities of RF-1 and RF-2. It binds guanine nucleotides and has strong preference for UGA stop codons. It may interact directly with the ribosome. The stimulation of RF-1 and RF-2 is significantly reduced by GTP and GDP, but not by GMP. The protein is Peptide chain release factor 3 of Shewanella sp. (strain ANA-3).